A 266-amino-acid polypeptide reads, in one-letter code: Protein crossbronx-like (266 aa).

Residues Lys15 to Asn178 enclose the UBC core domain.

The protein belongs to the ubiquitin-conjugating enzyme family. FTS subfamily.

The polypeptide is Protein crossbronx-like (Drosophila erecta (Fruit fly)).